The chain runs to 328 residues: Olfactory receptor 2AJ1 (328 aa).

Over 1–25 the chain is Extracellular; it reads MGHQNHTFSSDFILLGLFSSSPTSV. Residue N5 is glycosylated (N-linked (GlcNAc...) asparagine). A helical membrane pass occupies residues 26–49; sequence VFFLVLFVIFIMSVTENTLMILLI. Residues 50 to 57 are Cytoplasmic-facing; the sequence is RSDSRLHT. Residues 58-79 form a helical membrane-spanning segment; it reads PMYFLLSHLSLMDILHVSNIVP. The Extracellular portion of the chain corresponds to 80–100; sequence KMVTNFLSGSRTISFAGCGFQ. C97 and C189 are disulfide-bonded. A helical membrane pass occupies residues 101–120; it reads VFLSLTLLGGECLLLAAMSC. At 121–139 the chain is on the cytoplasmic side; the sequence is DRYVAICHPLRYPILMKEY. A helical membrane pass occupies residues 140-158; it reads ASALMAGGSWLIGVFNSTV. At 159-195 the chain is on the extracellular side; that stretch reads HTAYALQFPFCGSRAIDHFFCEVPAMLKLSCADTTRY. Residues 196–219 form a helical membrane-spanning segment; the sequence is ERGVCVSAVIFLLIPFSLISASYG. Over 220 to 236 the chain is Cytoplasmic; that stretch reads QIILTVLQMKSSEARKK. The helical transmembrane segment at 237 to 259 threads the bilayer; that stretch reads SFSTCSFHMIVVTMYYGPFIFTY. Residues 260–272 are Extracellular-facing; sequence MRPKSYHTPGQDK. Residues 273–292 traverse the membrane as a helical segment; that stretch reads FLAIFYTILTPTLNPFIYSF. Residues 293-328 are Cytoplasmic-facing; it reads RNKDVLAVMKNMLKSNFLHKKMNRKIPECVFCLFLC.

This sequence belongs to the G-protein coupled receptor 1 family.

The protein resides in the cell membrane. Functionally, odorant receptor. The chain is Olfactory receptor 2AJ1 (OR2AJ1) from Homo sapiens (Human).